A 147-amino-acid chain; its full sequence is MKKVSIYTDGACSGNPGDGGWGAILIYGNHEKEVSGFEKDTTNNRMELVAAINALKMLKEPCEVDLYSDSAYLVNGFLQNWVEKWKKNGWKTSNKEEVKNMELWQELDRLSNIHKIRWIKVKGHSDNEYNNRCDKLATDEIKKNSKK.

In terms of domain architecture, RNase H type-1 spans 1–142 (MKKVSIYTDG…CDKLATDEIK (142 aa)). Residues Asp-9, Glu-47, Asp-69, and Asp-134 each contribute to the Mg(2+) site.

This sequence belongs to the RNase H family. As to quaternary structure, monomer. It depends on Mg(2+) as a cofactor.

The protein localises to the cytoplasm. The enzyme catalyses Endonucleolytic cleavage to 5'-phosphomonoester.. Functionally, endonuclease that specifically degrades the RNA of RNA-DNA hybrids. The sequence is that of Ribonuclease H from Acetivibrio thermocellus (strain ATCC 27405 / DSM 1237 / JCM 9322 / NBRC 103400 / NCIMB 10682 / NRRL B-4536 / VPI 7372) (Clostridium thermocellum).